A 211-amino-acid chain; its full sequence is MLIKVCGLTRQADVDLAASFGASMCGFIFHPVSPRCVSPVQAASLESGSMLRVGVFVEQDAEEICRIMAEARLDMAQLHGRQDAACARAVGAQRVIRVIWPARYCHRALLYNELQNHADACACYLLDAGLAGGGSGVRLDWEDLNHLPSPRPWLLAGGLSAENVGLALSRCSPDGVDFNSGVEDAPGQKNAQKLAAALAVAAKQKGNRYLS.

It belongs to the TrpF family.

It catalyses the reaction N-(5-phospho-beta-D-ribosyl)anthranilate = 1-(2-carboxyphenylamino)-1-deoxy-D-ribulose 5-phosphate. It functions in the pathway amino-acid biosynthesis; L-tryptophan biosynthesis; L-tryptophan from chorismate: step 3/5. The chain is N-(5'-phosphoribosyl)anthranilate isomerase from Desulfovibrio desulfuricans (strain ATCC 27774 / DSM 6949 / MB).